Here is a 421-residue protein sequence, read N- to C-terminus: Alpha-tubulin N-acetyltransferase 1 (421 aa).

Positions 1–190 (MEFPFDVDAL…NNFVIFEGFF (190 aa)) constitute an N-acetyltransferase domain. At K56 the chain carries N6-acetyllysine; by autocatalysis. Residue 124-137 (FYIHESVQRHGHGR) participates in acetyl-CoA binding. At K146 the chain carries N6-acetyllysine; by autocatalysis. 160 to 169 (SQKLLKFLNK) is an acetyl-CoA binding site. The tract at residues 196-235 (PPAPSLRATRHSRAAAVDPTPAAPARKLPPKRAEGDIKPY) is disordered. Residues 209–221 (AAAVDPTPAAPAR) show a composition bias toward low complexity. Residues 226–235 (KRAEGDIKPY) show a composition bias toward basic and acidic residues. K233 and K244 each carry N6-acetyllysine; by autocatalysis. Residues 252-284 (PLNRAPRRATPPAHPPPRSSSLGNSPERGPLRP) form a disordered region. Phosphoserine is present on residues S272 and S276. Asymmetric dimethylarginine is present on R305. The interval 306–402 (LLLAADPGGS…PAQSWTVGGD (97 aa)) is disordered. Position 315 is a phosphoserine (S315). R323 is subject to Omega-N-methylarginine. Positions 342–354 (VNSSSPNTGNQDS) are enriched in polar residues. Basic and acidic residues predominate over residues 355 to 367 (KQGEQETKNRSAS).

It belongs to the acetyltransferase ATAT1 family. In terms of assembly, component of the BBSome complex. Interacts with AP2 alpha-adaptins, including AP2A2, but not with AP1 gamma-adaptin (AP1G1/AP1G2); this interaction is required for efficient alpha-tubulin acetylation, hence clathrin-coated pits are sites of microtubule acetylation. Post-translationally, autoacetylation strongly increases tubulin acetylation.

The protein resides in the cytoplasm. It localises to the membrane. Its subcellular location is the clathrin-coated pit. It is found in the cell junction. The protein localises to the focal adhesion. The protein resides in the cell projection. It localises to the axon. Its subcellular location is the cytoskeleton. It is found in the spindle. It carries out the reaction L-lysyl-[alpha-tubulin] + acetyl-CoA = N(6)-acetyl-L-lysyl-[alpha-tubulin] + CoA + H(+). In terms of biological role, specifically acetylates 'Lys-40' in alpha-tubulin on the lumenal side of microtubules. Promotes microtubule destabilization and accelerates microtubule dynamics; this activity may be independent of acetylation activity. Acetylates alpha-tubulin with a slow enzymatic rate, due to a catalytic site that is not optimized for acetyl transfer. Enters the microtubule through each end and diffuses quickly throughout the lumen of microtubules. Acetylates only long/old microtubules because of its slow acetylation rate since it does not have time to act on dynamically unstable microtubules before the enzyme is released. Required for normal sperm flagellar function. Promotes directional cell locomotion and chemotaxis, through AP2A2-dependent acetylation of alpha-tubulin at clathrin-coated pits that are concentrated at the leading edge of migrating cells. May facilitate primary cilium assembly. In Homo sapiens (Human), this protein is Alpha-tubulin N-acetyltransferase 1.